A 259-amino-acid polypeptide reads, in one-letter code: UPF0739 protein C1orf74 homolog (259 aa).

It belongs to the UPF0739 family.

The chain is UPF0739 protein C1orf74 homolog from Danio rerio (Zebrafish).